The chain runs to 231 residues: Ion-translocating oxidoreductase complex subunit E (231 aa).

6 helical membrane passes run 18–38, 39–59, 63–83, 86–106, 125–145, and 182–202; these read ALVQ…ATNA, LGLG…ISTL, TPAE…VSAV, LINA…PLIV, ALSA…MFVL, and PFLL…MLAG.

It belongs to the NqrDE/RnfAE family. The complex is composed of six subunits: RsxA, RsxB, RsxC, RsxD, RsxE and RsxG.

Its subcellular location is the cell inner membrane. Its function is as follows. Part of a membrane-bound complex that couples electron transfer with translocation of ions across the membrane. Required to maintain the reduced state of SoxR. In Escherichia coli (strain SE11), this protein is Ion-translocating oxidoreductase complex subunit E.